A 511-amino-acid polypeptide reads, in one-letter code: MNNEMILVLDFGGQYNQLIARRVREANVYCEVIPYNASLERIKSYNAKGIIFTGGPNSVLDEGAPKCDPGVFELGIPVLGICYGMQLMSVMLGGSVTAANQREYGKVEICVDKSQPLFRDVDENTICWMSHTYYVDTPPKGFEVIAKSANCPTGAMQHVEKNLYAVQFHPEVMHTPKGKEMLKNFLYNICGCKGDWKMSSFVENSINAIREKVGDKKVLCALSGGVDSSVAAVLIHKAIGKQLTCIFVDHGLLRKYEGDQVEQIFRKQYDINLIRVNCEDRFLQRLKGVSDPETKRKIIGEEFIRVFEDEAKKIGKVDFLVQGTIYPDVIESGIGDAAVIKSHHNVGGLPEHVDFKEIIEPLRSLFKDEVRRAGEELGIPEDLVWRQPFPGPGLAIRVIGDLTKEKLDTLRDTDYIFREEIKAAGLDKEINQYFTVLTNMRSVGVMGDERTYDYALALRAVTTTDFMTADWARIPYDILEKVSTRIVNEVKQINRIVYDITSKPPATIEWE.

A Glutamine amidotransferase type-1 domain is found at 5-195 (MILVLDFGGQ…LYNICGCKGD (191 aa)). The active-site Nucleophile is the Cys82. Catalysis depends on residues His169 and Glu171. Residues 196 to 386 (WKMSSFVENS…LGIPEDLVWR (191 aa)) enclose the GMPS ATP-PPase domain. 223-229 (SGGVDSS) is a binding site for ATP.

In terms of assembly, homodimer.

It carries out the reaction XMP + L-glutamine + ATP + H2O = GMP + L-glutamate + AMP + diphosphate + 2 H(+). It functions in the pathway purine metabolism; GMP biosynthesis; GMP from XMP (L-Gln route): step 1/1. In terms of biological role, catalyzes the synthesis of GMP from XMP. In Ruminiclostridium cellulolyticum (strain ATCC 35319 / DSM 5812 / JCM 6584 / H10) (Clostridium cellulolyticum), this protein is GMP synthase [glutamine-hydrolyzing].